Consider the following 133-residue polypeptide: Ribosome-binding factor A (133 aa).

It belongs to the RbfA family. In terms of assembly, monomer. Binds 30S ribosomal subunits, but not 50S ribosomal subunits or 70S ribosomes.

The protein localises to the cytoplasm. Its function is as follows. One of several proteins that assist in the late maturation steps of the functional core of the 30S ribosomal subunit. Associates with free 30S ribosomal subunits (but not with 30S subunits that are part of 70S ribosomes or polysomes). Required for efficient processing of 16S rRNA. May interact with the 5'-terminal helix region of 16S rRNA. The polypeptide is Ribosome-binding factor A (Chlamydia muridarum (strain MoPn / Nigg)).